We begin with the raw amino-acid sequence, 538 residues long: MRWRRVGDVVAVALLLGAAAAAAAAAARHDYEEALRKSLLYFEAQRSGRLPHGQRVAWRDHSGLTDGLEQGVDLVGGYYDAGDHVKFGLPMAFTVTMLSWSLLEYGADVAAAGELAHALDAIKWGTDYFIKAHTKPHELWAEVGDGDTDHYCWQRPEDMTTSRQAYKVDRRRPGSDVAGETAAAMAAASIVFRQSNPHYSHLLLHHAQQLFEFADTYRGKYDSSIAEVKSYYASVSGYHDELLWAALWLHRATGRAAYLDYAVDNADEFGGTGWAITEFSWDVKYAGVQILAARLLMRGEHEERHRGTLERYREKAEHYVCACMGRNAAGGADANVERSPGGMLYVRQWNNMQYVTNAAFLLSAYSDYLAGAGDGDGDGGGGVATCVGGGGAGAGEVFAAAREQVDYVLGSNPRGMSYLVGYGERFPARVHHRAASIVPYKDSKEFIGCAQGFDDWFGRRGANPNVVVGAIVGGPDRRDRFRDDRENYMQTEACTYNTAPMVGMFAMLNRLSRQESPSTTTTTTATTSSPEMGLSVNR.

The signal sequence occupies residues 1 to 26 (MRWRRVGDVVAVALLLGAAAAAAAAA). The Nucleophile role is filled by Asp-83. Catalysis depends on residues His-431, Asp-483, and Glu-492. The tract at residues 513–538 (RQESPSTTTTTTATTSSPEMGLSVNR) is disordered. The span at 516-530 (SPSTTTTTTATTSSP) shows a compositional bias: low complexity.

Belongs to the glycosyl hydrolase 9 (cellulase E) family.

The protein resides in the secreted. The catalysed reaction is Endohydrolysis of (1-&gt;4)-beta-D-glucosidic linkages in cellulose, lichenin and cereal beta-D-glucans.. The sequence is that of Endoglucanase 16 from Oryza sativa subsp. japonica (Rice).